The following is a 239-amino-acid chain: tRNA (guanine-N(7)-)-methyltransferase (239 aa).

The S-adenosyl-L-methionine site is built by Glu-69, Glu-94, Asp-121, and Asp-144. Asp-144 is a catalytic residue. Lys-148 is a substrate binding site. The interval Arg-150–Arg-155 is interaction with RNA. Substrate-binding positions include Asp-180 and Thr-217–Glu-220.

Belongs to the class I-like SAM-binding methyltransferase superfamily. TrmB family. As to quaternary structure, monomer.

It catalyses the reaction guanosine(46) in tRNA + S-adenosyl-L-methionine = N(7)-methylguanosine(46) in tRNA + S-adenosyl-L-homocysteine. The protein operates within tRNA modification; N(7)-methylguanine-tRNA biosynthesis. Catalyzes the formation of N(7)-methylguanine at position 46 (m7G46) in tRNA. In Klebsiella pneumoniae subsp. pneumoniae (strain ATCC 700721 / MGH 78578), this protein is tRNA (guanine-N(7)-)-methyltransferase.